A 978-amino-acid chain; its full sequence is Chaperone protein ClpB2, chloroplastic (978 aa).

The N-terminal 76 residues, 1-76 (MAAAPPLAAG…RMPPRTLSVR (76 aa)), are a transit peptide targeting the chloroplast. The 145-residue stretch at 85–229 (TQQEFTEMAW…KTAIESIRGK (145 aa)) folds into the Clp R domain. Repeat regions lie at residues 89-154 (FTEM…IQRQ) and 166-229 (LGRD…IRGK). The tract at residues 244-492 (LDKYGKDLTA…KLKMEITSKP (249 aa)) is i. Residues 289 to 296 (GEPGVGKT) and 692 to 699 (GPTGVGKT) each bind ATP. An II region spans residues 618–809 (VTQDDIAEIV…IIIMTSNVGS (192 aa)).

It belongs to the ClpA/ClpB family.

The protein localises to the plastid. It localises to the chloroplast. Its function is as follows. Molecular chaperone that may play a role in chloroplast development. This chain is Chaperone protein ClpB2, chloroplastic (CLPB2), found in Oryza sativa subsp. japonica (Rice).